A 234-amino-acid polypeptide reads, in one-letter code: Orotate phosphoribosyltransferase (234 aa).

Lysine 30 lines the 5-phospho-alpha-D-ribose 1-diphosphate pocket. 38–39 serves as a coordination point for orotate; the sequence is FF. Residues 76–77, arginine 103, lysine 104, lysine 107, histidine 109, and 128–136 each bind 5-phospho-alpha-D-ribose 1-diphosphate; these read YK and DDVITAGTA. Positions 132 and 160 each coordinate orotate.

The protein belongs to the purine/pyrimidine phosphoribosyltransferase family. PyrE subfamily. As to quaternary structure, homodimer. Mg(2+) serves as cofactor.

The catalysed reaction is orotidine 5'-phosphate + diphosphate = orotate + 5-phospho-alpha-D-ribose 1-diphosphate. The protein operates within pyrimidine metabolism; UMP biosynthesis via de novo pathway; UMP from orotate: step 1/2. In terms of biological role, catalyzes the transfer of a ribosyl phosphate group from 5-phosphoribose 1-diphosphate to orotate, leading to the formation of orotidine monophosphate (OMP). This is Orotate phosphoribosyltransferase from Chromohalobacter salexigens (strain ATCC BAA-138 / DSM 3043 / CIP 106854 / NCIMB 13768 / 1H11).